Here is a 177-residue protein sequence, read N- to C-terminus: MSRIGKRAVAIPSGVEAKIDNGTLTVKGPKGTLSLGLSDLIDYKIEGDEIAVNPANDTQKARSYWGMQRTLVSNLVEGVTEGFSKTLEISGVGYRAQAQGKTLKLQLGYSHDVDIAVPEGLEVKTPDQTTVIISGIDKQAVGQLAAEIRQWRKPEPYKGKGIKYQGEYVFRKEGKKK.

This sequence belongs to the universal ribosomal protein uL6 family. Part of the 50S ribosomal subunit.

In terms of biological role, this protein binds to the 23S rRNA, and is important in its secondary structure. It is located near the subunit interface in the base of the L7/L12 stalk, and near the tRNA binding site of the peptidyltransferase center. This is Large ribosomal subunit protein uL6 from Erythrobacter litoralis (strain HTCC2594).